Here is a 509-residue protein sequence, read N- to C-terminus: Lysine--tRNA ligase (509 aa).

A compositionally biased stretch (polar residues) spans methionine 1–leucine 18. A disordered region spans residues methionine 1–aspartate 20. Positions 418 and 425 each coordinate Mg(2+).

Belongs to the class-II aminoacyl-tRNA synthetase family. In terms of assembly, homodimer. The cofactor is Mg(2+).

The protein localises to the cytoplasm. It catalyses the reaction tRNA(Lys) + L-lysine + ATP = L-lysyl-tRNA(Lys) + AMP + diphosphate. The protein is Lysine--tRNA ligase of Psychromonas ingrahamii (strain DSM 17664 / CCUG 51855 / 37).